The following is a 142-amino-acid chain: Large ribosomal subunit protein uL13 (142 aa).

The protein belongs to the universal ribosomal protein uL13 family. As to quaternary structure, part of the 50S ribosomal subunit.

This protein is one of the early assembly proteins of the 50S ribosomal subunit, although it is not seen to bind rRNA by itself. It is important during the early stages of 50S assembly. The sequence is that of Large ribosomal subunit protein uL13 from Syntrophus aciditrophicus (strain SB).